The following is a 1255-amino-acid chain: DNA-directed RNA polymerase subunit beta' (1255 aa).

Zn(2+)-binding residues include C60, C62, C77, and C80. D503, D505, and D507 together coordinate Mg(2+). Residues C875, C950, C957, and C960 each contribute to the Zn(2+) site.

The protein belongs to the RNA polymerase beta' chain family. As to quaternary structure, the RNAP catalytic core consists of 2 alpha, 1 beta, 1 beta' and 1 omega subunit. When a sigma factor is associated with the core the holoenzyme is formed, which can initiate transcription. Requires Mg(2+) as cofactor. It depends on Zn(2+) as a cofactor.

It catalyses the reaction RNA(n) + a ribonucleoside 5'-triphosphate = RNA(n+1) + diphosphate. Functionally, DNA-dependent RNA polymerase catalyzes the transcription of DNA into RNA using the four ribonucleoside triphosphates as substrates. This Mycoplasma capricolum subsp. capricolum (strain California kid / ATCC 27343 / NCTC 10154) protein is DNA-directed RNA polymerase subunit beta'.